Reading from the N-terminus, the 350-residue chain is Ribosome production factor 2 homolog (350 aa).

Positions 28 to 266 (KTCLFLRGTT…LGRMREPDPA (239 aa)) constitute a Brix domain. Residues 192–202 (PTSSTSTNNDG) show a composition bias toward polar residues. 2 disordered regions span residues 192-219 (PTSS…SIDP) and 301-350 (MGKT…KVKG).

This sequence belongs to the RPF2 family. As to quaternary structure, component of a hexameric 5S RNP precursor complex, composed of 5S RNA, RRS1, RPF2, RPL5, RPL11 and SYO1; this complex acts as a precursor for ribosome assembly.

The protein resides in the nucleus. Its subcellular location is the nucleolus. Functionally, involved in ribosomal large subunit assembly. The chain is Ribosome production factor 2 homolog from Chaetomium thermophilum (strain DSM 1495 / CBS 144.50 / IMI 039719) (Thermochaetoides thermophila).